We begin with the raw amino-acid sequence, 258 residues long: L-aminoadipate-semialdehyde dehydrogenase-phosphopantetheinyl transferase (258 aa).

It belongs to the P-Pant transferase superfamily. AcpS family.

The protein localises to the cytoplasm. The protein resides in the nucleus. The catalysed reaction is apo-[ACP] + CoA = holo-[ACP] + adenosine 3',5'-bisphosphate + H(+). Its function is as follows. Catalyzes the transfer of a 4'-phosphopantetheine moiety from coenzyme A to a serine residue of acceptor proteins, such as alpha-aminoadipate reductase. Necessary for alpha-aminoadipate reductase activity. This Schizosaccharomyces pombe (strain 972 / ATCC 24843) (Fission yeast) protein is L-aminoadipate-semialdehyde dehydrogenase-phosphopantetheinyl transferase (lys7).